A 490-amino-acid polypeptide reads, in one-letter code: GTPase Der (490 aa).

EngA-type G domains lie at 3 to 166 and 203 to 376; these read PVVA…MEDL and IKLA…DSST. GTP contacts are provided by residues 9 to 16, 56 to 60, 118 to 121, 209 to 216, 256 to 260, and 321 to 324; these read GRPNVGKS, DTGGI, NKTD, DTAGV, and NKWD. Positions 377 to 461 constitute a KH-like domain; that stretch reads RRVGTSMLTR…PIRIQFKEGE (85 aa).

The protein belongs to the TRAFAC class TrmE-Era-EngA-EngB-Septin-like GTPase superfamily. EngA (Der) GTPase family. As to quaternary structure, associates with the 50S ribosomal subunit.

In terms of biological role, GTPase that plays an essential role in the late steps of ribosome biogenesis. In Escherichia fergusonii (strain ATCC 35469 / DSM 13698 / CCUG 18766 / IAM 14443 / JCM 21226 / LMG 7866 / NBRC 102419 / NCTC 12128 / CDC 0568-73), this protein is GTPase Der.